A 142-amino-acid polypeptide reads, in one-letter code: Calmodulin-alpha (142 aa).

Ala-2 carries the post-translational modification N-acetylalanine. 4 EF-hand domains span residues 8–43 (EQIA…LGQN), 44–79 (PTEA…KMKD), 81–116 (DSEE…LGEK), and 117–142 (LTDE…YEEF). Ca(2+)-binding residues include Asp-21, Asp-23, Asp-25, Thr-27, Glu-32, Asp-57, Asp-59, Asn-61, Thr-63, Glu-68, Asp-94, Asp-96, Asn-98, Tyr-100, and Glu-105. N6,N6,N6-trimethyllysine is present on Lys-116. Positions 130, 132, 134, 136, and 141 each coordinate Ca(2+).

This sequence belongs to the calmodulin family.

Functionally, calmodulin mediates the control of a large number of enzymes, ion channels and other proteins by Ca(2+). Among the enzymes to be stimulated by the calmodulin-Ca(2+) complex are a number of protein kinases and phosphatases. This is Calmodulin-alpha from Arbacia punctulata (Punctuate sea urchin).